A 432-amino-acid chain; its full sequence is Homogentisate 1,2-dioxygenase (432 aa).

Catalysis depends on H286, which acts as the Proton acceptor. H329 and E335 together coordinate Fe cation. Residues Y344 and H365 each contribute to the homogentisate site. H365 serves as a coordination point for Fe cation.

The protein belongs to the homogentisate dioxygenase family. In terms of assembly, hexamer; dimer of trimers. Requires Fe cation as cofactor.

The catalysed reaction is homogentisate + O2 = 4-maleylacetoacetate + H(+). Its pathway is amino-acid degradation; L-phenylalanine degradation; acetoacetate and fumarate from L-phenylalanine: step 4/6. Involved in the catabolism of homogentisate (2,5-dihydroxyphenylacetate or 2,5-OH-PhAc), a central intermediate in the degradation of phenylalanine and tyrosine. Catalyzes the oxidative ring cleavage of the aromatic ring of homogentisate to yield maleylacetoacetate. This chain is Homogentisate 1,2-dioxygenase, found in Bordetella pertussis (strain Tohama I / ATCC BAA-589 / NCTC 13251).